A 1053-amino-acid polypeptide reads, in one-letter code: 3-hydroxy-3-methylglutaryl-coenzyme A reductase (1053 aa).

The Cytoplasmic segment spans residues 1-8; it reads MIYKLAAR. The chain crosses the membrane as a helical span at residues 9 to 29; the sequence is YPIQVIAIVGILVSMAYFSFL. Topologically, residues 30 to 203 are lumenal; the sequence is EALTQEDFPV…LKIASQASKT (174 aa). N-linked (GlcNAc...) asparagine glycosylation occurs at asparagine 137. A helical transmembrane segment spans residues 204–224; that stretch reads ELLIVGTAYACMLISIVSLYL. In terms of domain architecture, SSD spans 204–365; sequence ELLIVGTAYA…FSFFVAILTL (162 aa). At 225–232 the chain is on the cytoplasmic side; sequence KMRRLGSK. Residues 233 to 253 form a helical membrane-spanning segment; the sequence is FWLFFSVLLSTLFSVQFAMTL. Residues 254-258 are Lumenal-facing; sequence VRASG. A helical membrane pass occupies residues 259–279; sequence VRISLVSLIESLPFLINVVAL. Over 280–320 the chain is Cytoplasmic; sequence DKAAELTRQVITRCSVSDSHSPMHEDIAKACRNAAPPILRH. The next 2 helical transmembrane spans lie at 321 to 341 and 342 to 362; these read FSFG…IKQF and FLFA…FVAI. Residues 363–417 are Cytoplasmic-facing; the sequence is LTLKLEMRRYNAKDDVRKVLIEEGLSESTARHVADGNDSSATTSAGSRYFKVRYG. Residues 418–438 traverse the membrane as a helical segment; it reads TKIILFIFIAFNLFELCSIPF. Residues 439-526 are Lumenal-facing; that stretch reads KHYAATSAAA…NNWSHYISAS (88 aa). An N-linked (GlcNAc...) asparagine glycan is attached at asparagine 518. Residues 527–547 traverse the membrane as a helical segment; sequence FLSKWIVCALSLSIAVNVFLL. At 548–1053 the chain is on the cytoplasmic side; sequence NAARLNSIKE…KSVNSRVPGR (506 aa). Residue glutamate 712 is the Charge relay system of the active site. A CoA-binding site is contributed by 718–724; it reads STMRGCK. NADP(+) contacts are provided by residues 779-781 and 806-814; these read SRF and DAMGMNMIS. Lysine 846 acts as the Charge relay system in catalysis. Residue 875–877 coordinates CoA; that stretch reads VLK. Aspartate 922 acts as the Charge relay system in catalysis. 1017–1018 serves as a coordination point for CoA; it reads SH. Catalysis depends on histidine 1018, which acts as the Proton donor. 1022 to 1023 provides a ligand contact to NADP(+); it reads NR. Phosphoserine is present on serine 1024. Threonine 1028 carries the phosphothreonine modification. The segment at 1028 to 1053 is disordered; that stretch reads TPAMDSSAKKPATDALKSVNSRVPGR.

This sequence belongs to the HMG-CoA reductase family.

The protein resides in the endoplasmic reticulum membrane. It is found in the nucleus envelope. The catalysed reaction is (R)-mevalonate + 2 NADP(+) + CoA = (3S)-3-hydroxy-3-methylglutaryl-CoA + 2 NADPH + 2 H(+). Its pathway is metabolic intermediate biosynthesis; (R)-mevalonate biosynthesis; (R)-mevalonate from acetyl-CoA: step 3/3. Functionally, part of the first module of ergosterol biosynthesis pathway that includes the early steps of the pathway, conserved across all eukaryotes, and which results in the formation of mevalonate from acetyl-coenzyme A (acetyl-CoA). Hmg1 catalyzes the reduction of hydroxymethylglutaryl-CoA (HMG-CoA) to mevalonate. The first module starts with the action of the cytosolic acetyl-CoA acetyltransferase eg10 that catalyzes the formation of acetoacetyl-CoA. The hydroxymethylglutaryl-CoA synthases erg13 then condenses acetyl-CoA with acetoacetyl-CoA to form HMG-CoA. The rate-limiting step of the early module is the reduction to mevalonate by the 3-hydroxy-3-methylglutaryl-coenzyme A (HMG-CoA) reductases hcs1. The sequence is that of 3-hydroxy-3-methylglutaryl-coenzyme A reductase from Schizosaccharomyces pombe (strain 972 / ATCC 24843) (Fission yeast).